A 238-amino-acid chain; its full sequence is CD209 antigen-like protein A (238 aa).

The Cytoplasmic segment spans residues 1–51; the sequence is MSDSKEMGKRQLRPLDEELLTSSHTRHSIKGFGFQTNSGFSSFTGCLVHSQ. A helical; Signal-anchor for type II membrane protein transmembrane segment spans residues 52-72; it reads VPLALQVLFLAVCSVLLVVIL. Residues 73–238 are Extracellular-facing; it reads VKVYKIPSSQ…KKLSTSCPSK (166 aa). A disulfide bridge connects residues cysteine 108 and cysteine 119. Residues 115 to 229 form the C-type lectin domain; the sequence is FQGSCYFFSV…CTNKKFWICK (115 aa). An N-linked (GlcNAc...) asparagine glycan is attached at asparagine 130. Cystine bridges form between cysteine 136–cysteine 228 and cysteine 207–cysteine 220. The Ca(2+) site is built by glutamate 198, asparagine 200, leucine 202, glutamate 205, asparagine 216, and aspartate 217. Asparagine 216 carries an N-linked (GlcNAc...) asparagine glycan.

Predominantly expressed in dendritic cells. Detected at very low levels in lung, spleen, lymph nodes and bone marrow.

The protein localises to the membrane. Functionally, probable pathogen-recognition receptor. May mediate the endocytosis of pathogens which are subsequently degraded in lysosomal compartments. May recognize in a calcium-dependent manner high mannose N-linked oligosaccharides in a variety of pathogen antigens. The chain is CD209 antigen-like protein A (Cd209a) from Mus musculus (Mouse).